We begin with the raw amino-acid sequence, 481 residues long: Flavonol 3-O-glucosyltransferase UGT71C1 (481 aa).

Histidine 19 functions as the Proton acceptor in the catalytic mechanism. Histidine 19 serves as a coordination point for an anthocyanidin. Residue aspartate 131 is the Charge relay of the active site. 8 residues coordinate UDP-alpha-D-glucose: threonine 153, alanine 352, glutamine 354, histidine 369, tryptophan 372, asparagine 373, serine 374, and glutamate 377. Alanine 392 serves as a coordination point for an anthocyanidin. Positions 393 and 394 each coordinate UDP-alpha-D-glucose.

It belongs to the UDP-glycosyltransferase family.

The catalysed reaction is a flavonol + UDP-alpha-D-glucose = a flavonol 3-O-beta-D-glucoside + UDP + H(+). It carries out the reaction a 7-O-hydroxy-flavonol + UDP-alpha-D-glucose = a flavonol 7-O-beta-D-glucoside + UDP + H(+). Possesses quercetin 7-O-glucosyltransferase and 3'-O-glucosyltransferase activities in vitro. Also active in vitro on benzoates and benzoate derivatives. Glucosylates other secondary metabolites in vitro like trans-resveratrol, curcumin, vanillin and etoposide. The polypeptide is Flavonol 3-O-glucosyltransferase UGT71C1 (Arabidopsis thaliana (Mouse-ear cress)).